Consider the following 314-residue polypeptide: PDCD10 and GCKIII kinases-associated protein 1 (314 aa).

S30 carries the post-translational modification Phosphoserine. A disordered region spans residues 36 to 142 (DDTDKLKGKW…TQPFLEGGGT (107 aa)). T106 is subject to Phosphothreonine. Residues 107–116 (PQPTGNSSPT) are compositionally biased toward polar residues. 2 positions are modified to phosphoserine: S238 and S241. The interval 267–291 (VDSGNRQEDTHGSDGDGDGEIVDED) is disordered. Residues 271–280 (NRQEDTHGSD) show a composition bias toward basic and acidic residues. The span at 281-291 (GDGDGEIVDED) shows a compositional bias: acidic residues.

As to quaternary structure, interacts with KEAP1; this interaction prevents the ubiquitination of KEAP1 by TRIM25, thus protecting KEAP1 from degradation. Found in association with PDCD10 and members of the STE20 kinases, such as STK24, STK25 and STK26.

The protein localises to the cell membrane. Acts as a tumor suppressor. Acts as a tumor suppressor for colorectal cancer cell proliferation by targeting KEAP1/USP17/ELK1/CDK6 axis. The protein is PDCD10 and GCKIII kinases-associated protein 1 of Homo sapiens (Human).